Here is a 559-residue protein sequence, read N- to C-terminus: Thermosome subunit alpha (559 aa).

Residues 536–552 (SGEKKGEKKEGGEEEKS) are compositionally biased toward basic and acidic residues. The segment at 536–559 (SGEKKGEKKEGGEEEKSSTPSSLE) is disordered.

Belongs to the TCP-1 chaperonin family. In terms of assembly, forms a Heterooligomeric complex of two stacked nine-membered rings; one of alpha and the other of beta subunits.

Functionally, molecular chaperone; binds unfolded polypeptides in vitro, and has a weak ATPase activity. The polypeptide is Thermosome subunit alpha (thsA) (Sulfurisphaera tokodaii (strain DSM 16993 / JCM 10545 / NBRC 100140 / 7) (Sulfolobus tokodaii)).